The sequence spans 809 residues: WASP homolog-associated protein with actin, membranes and microtubules (809 aa).

Residues methionine 1 to isoleucine 260 are mediates association with membranes. Residues leucine 261–serine 630 form a mediates interaction with microtubules region. Coiled coils occupy residues proline 271–isoleucine 298, glutamate 384–arginine 479, and serine 512–leucine 542. 4 disordered regions span residues tyrosine 506–lysine 528, lysine 546–leucine 571, isoleucine 586–cysteine 612, and glutamine 627–proline 707. Residues methionine 515–lysine 528 are compositionally biased toward basic and acidic residues. Serine 606 is modified (phosphoserine). The segment at lysine 631–glycine 809 is mediates actin nucleation. The segment covering leucine 638 to leucine 659 has biased composition (pro residues). Residues leucine 662–asparagine 673 are compositionally biased toward polar residues. WH2 domains lie at serine 709–valine 727 and isoleucine 739–valine 756. Positions lysine 754–glycine 809 are disordered. The span at asparagine 763–arginine 772 shows a compositional bias: polar residues. Positions serine 770–glutamate 797 form a coiled coil. Positions aspartate 794–aspartate 803 are enriched in acidic residues. Phosphoserine is present on serine 795.

As to quaternary structure, interacts with ACTR3; indicative for an association with the ARP2/3 complex. Associates with microtubules; in vitro binds to tubulin heterodimer in a 1:1 stoichiometry; decorates microtubules with a repeat of 80 A along protofilaments. Interacts with RHOD (in GTP-bound form). In terms of tissue distribution, expressed in brain, lung, heart, colon and kidney (at protein level).

The protein resides in the cytoplasm. The protein localises to the endoplasmic reticulum-Golgi intermediate compartment. Its subcellular location is the cytoplasmic vesicle membrane. It localises to the golgi apparatus. It is found in the cis-Golgi network. Functionally, acts as a nucleation-promoting factor (NPF) that stimulates Arp2/3-mediated actin polymerization both at the Golgi apparatus and along tubular membranes. Its activity in membrane tubulation requires F-actin and interaction with microtubules. Proposed to use coordinated actin-nucleating and microtubule-binding activities of distinct WHAMM molecules to drive membrane tubule elongation; when MT-bound can recruit and remodel membrane vesicles but is prevented to activate the Arp2/3 complex. Involved as a regulator of Golgi positioning and morphology. Participates in vesicle transport between the reticulum endoplasmic and the Golgi complex. Required for RhoD-dependent actin reorganization such as in cell adhesion and cell migration. In Homo sapiens (Human), this protein is WASP homolog-associated protein with actin, membranes and microtubules (WHAMM).